The primary structure comprises 118 residues: Large ribosomal subunit protein bL20 (118 aa).

Belongs to the bacterial ribosomal protein bL20 family.

Functionally, binds directly to 23S ribosomal RNA and is necessary for the in vitro assembly process of the 50S ribosomal subunit. It is not involved in the protein synthesizing functions of that subunit. This is Large ribosomal subunit protein bL20 from Bacillus anthracis (strain CDC 684 / NRRL 3495).